The chain runs to 416 residues: Glutamyl-tRNA reductase (416 aa).

Residues 49-52 (TCNR), serine 105, 110-112 (EPQ), and glutamine 116 contribute to the substrate site. The active-site Nucleophile is the cysteine 50. 185–190 (GAGETI) contacts NADP(+).

It belongs to the glutamyl-tRNA reductase family. In terms of assembly, homodimer.

The enzyme catalyses (S)-4-amino-5-oxopentanoate + tRNA(Glu) + NADP(+) = L-glutamyl-tRNA(Glu) + NADPH + H(+). It functions in the pathway porphyrin-containing compound metabolism; protoporphyrin-IX biosynthesis; 5-aminolevulinate from L-glutamyl-tRNA(Glu): step 1/2. In terms of biological role, catalyzes the NADPH-dependent reduction of glutamyl-tRNA(Glu) to glutamate 1-semialdehyde (GSA). The sequence is that of Glutamyl-tRNA reductase from Shewanella baltica (strain OS185).